We begin with the raw amino-acid sequence, 712 residues long: Polyribonucleotide nucleotidyltransferase (712 aa).

The Mg(2+) site is built by Asp487 and Asp493. Residues 554–613 (PKIITMTINPDKIRDVIGPSGKQINKIIEETGVKIDIEQDGTVFISSINQEMNDKAKKII) form the KH domain. The S1 motif domain occupies 623 to 691 (GEIYEAKVKR…KQGRVNLSRK (69 aa)).

It belongs to the polyribonucleotide nucleotidyltransferase family. Mg(2+) is required as a cofactor.

The protein resides in the cytoplasm. The catalysed reaction is RNA(n+1) + phosphate = RNA(n) + a ribonucleoside 5'-diphosphate. Functionally, involved in mRNA degradation. Catalyzes the phosphorolysis of single-stranded polyribonucleotides processively in the 3'- to 5'-direction. In Bacillus cereus (strain ATCC 14579 / DSM 31 / CCUG 7414 / JCM 2152 / NBRC 15305 / NCIMB 9373 / NCTC 2599 / NRRL B-3711), this protein is Polyribonucleotide nucleotidyltransferase.